Consider the following 319-residue polypeptide: ATP-dependent 6-phosphofructokinase (319 aa).

Gly-11 contacts ATP. 21-25 (RAVTR) is a binding site for ADP. ATP is bound by residues 72 to 73 (RF) and 102 to 105 (GDGS). Asp-103 contributes to the Mg(2+) binding site. 125 to 127 (SID) contacts substrate. Asp-127 acts as the Proton acceptor in catalysis. Position 154 (Arg-154) interacts with ADP. Substrate contacts are provided by residues Arg-162 and 169–171 (MGR). Residues 185–187 (GAD) and 213–215 (KKH) contribute to the ADP site. Residues Glu-222, Arg-243, and 249–252 (HMQR) contribute to the substrate site.

Belongs to the phosphofructokinase type A (PFKA) family. ATP-dependent PFK group I subfamily. Prokaryotic clade 'B1' sub-subfamily. As to quaternary structure, homotetramer. It depends on Mg(2+) as a cofactor.

Its subcellular location is the cytoplasm. The enzyme catalyses beta-D-fructose 6-phosphate + ATP = beta-D-fructose 1,6-bisphosphate + ADP + H(+). Its pathway is carbohydrate degradation; glycolysis; D-glyceraldehyde 3-phosphate and glycerone phosphate from D-glucose: step 3/4. Allosterically activated by ADP and other diphosphonucleosides, and allosterically inhibited by phosphoenolpyruvate. In terms of biological role, catalyzes the phosphorylation of D-fructose 6-phosphate to fructose 1,6-bisphosphate by ATP, the first committing step of glycolysis. In Lactobacillus johnsonii (strain CNCM I-12250 / La1 / NCC 533), this protein is ATP-dependent 6-phosphofructokinase.